Reading from the N-terminus, the 605-residue chain is Acetoin dehydrogenase operon transcriptional activator AcoR (605 aa).

One can recognise a Sigma-54 factor interaction domain in the interval 295–520 (VIGQSGRSQA…LFNVFERLSI (226 aa)). Residues 323-330 (GETGTGKE) and 387-396 (ANQGTLFLDE) contribute to the ATP site. Residues 578-597 (VSQAAKISGIPRSTFYKRLK) constitute a DNA-binding region (H-T-H motif).

Functionally, acts as a transcriptional activator of the acoABCL operon encoding the acetoin dehydrogenase complex. The sequence is that of Acetoin dehydrogenase operon transcriptional activator AcoR (acoR) from Bacillus subtilis (strain 168).